Reading from the N-terminus, the 244-residue chain is Large ribosomal subunit protein uL30 (244 aa).

This sequence belongs to the universal ribosomal protein uL30 family.

The sequence is that of Large ribosomal subunit protein uL30 (RPL7) from Candida glabrata (strain ATCC 2001 / BCRC 20586 / JCM 3761 / NBRC 0622 / NRRL Y-65 / CBS 138) (Yeast).